The chain runs to 270 residues: MDTYTSAKINWFPGHMKKIHDQLKKLSSQIDGIIEIVDARAPTLTHNSEIISYFLNKPKLILALKTDLAQYKPNKKILFGSLKEPFKLKKKVLKTLTTLFANKRQQLKAKGLLIKQFRLAVIGMPNVGKSSLINLLINKNHLKVANRAGITKSLNWIQISPELLLSDTPGVFLKRIDEIQIGYKLVLTNVIRREVVNIEEVGMFAFNYLKKHYKQLLPFEADSFINFLEKFAKVRGLIKKANELNTNLACEIFINELINGKYGKLSYELN.

A CP-type G domain is found at H20–K174. Residues N126–S131 and G170 contribute to the GTP site.

The protein belongs to the TRAFAC class YlqF/YawG GTPase family. MTG1 subfamily.

Its subcellular location is the cytoplasm. Its function is as follows. Required for a late step of 50S ribosomal subunit assembly. Has GTPase activity. Binds to the 23S rRNA. The polypeptide is Probable ribosome biogenesis GTPase A (rbgA) (Mycoplasma genitalium (strain ATCC 33530 / DSM 19775 / NCTC 10195 / G37) (Mycoplasmoides genitalium)).